The primary structure comprises 1082 residues: Integrator complex subunit 3 homolog (1082 aa).

Disordered regions lie at residues 483–563 (PGPP…VSDD), 923–945 (YPSN…TAPT), and 1005–1082 (DETS…SDSD). 2 stretches are compositionally biased toward low complexity: residues 517–528 (PAAKAASTAASA) and 542–555 (TKPA…TTTT). A compositionally biased stretch (polar residues) spans 936 to 945 (KSAQQNTAPT). Composition is skewed to low complexity over residues 1008–1018 (STTVGRRGTSS) and 1033–1056 (EKAA…ASAK).

Belongs to the Integrator subunit 3 family. As to quaternary structure, belongs to the multiprotein complex Integrator. The core complex associates with protein phosphatase 2A subunits, to form the Integrator-PP2A (INTAC) complex.

It is found in the nucleus. Its subcellular location is the cytoplasm. Its function is as follows. Component of the integrator complex, a multiprotein complex that terminates RNA polymerase II (Pol II) transcription in the promoter-proximal region of genes. The integrator complex provides a quality checkpoint during transcription elongation by driving premature transcription termination of transcripts that are unfavorably configured for transcriptional elongation: the complex terminates transcription by (1) catalyzing dephosphorylation of the C-terminal domain (CTD) of Pol II subunit Polr2A/Rbp1 and Spt5, and (2) degrading the exiting nascent RNA transcript via endonuclease activity. The integrator complex is also involved in the 3'-end processing of the U7 snRNA, and also the spliceosomal snRNAs U1, U2, U4 and U5. The chain is Integrator complex subunit 3 homolog from Anopheles gambiae (African malaria mosquito).